We begin with the raw amino-acid sequence, 111 residues long: Putative single-stranded DNA-binding protein ycf41 (111 aa).

The region spanning 1-98 is the SSB domain; it reads MNKCNLLVQI…FSTSRIFKYK (98 aa).

Its subcellular location is the plastid. The protein resides in the chloroplast. The polypeptide is Putative single-stranded DNA-binding protein ycf41 (ycf41) (Porphyra purpurea (Red seaweed)).